The sequence spans 658 residues: Translin-associated factor X-interacting protein 1 (658 aa).

Coiled coils occupy residues 144-184 and 230-295; these read EISL…AEEY and ALKM…LMQL.

As to quaternary structure, interacts with TSNAX.

The protein localises to the cytoplasm. Its subcellular location is the perinuclear region. In terms of biological role, possible role in spermatogenesis. The sequence is that of Translin-associated factor X-interacting protein 1 from Homo sapiens (Human).